The chain runs to 601 residues: MVSFTLRAIGACLVSLPALVTAAPTSHISGDFQVLEQLHEVPQGWVQTGSPAPSSQLKFKLALQQDKAAAFEQHVMDISNPKHENYGKHMTQEEVDAFLQPPAHMTDSVFNWLASEGIPKHSIKADTDWLTFTTTVQKAEKLLNTRFYNFKNTIDNTQVIRTLQYSVAETVAPYVHMIQPTTKFSAPRPELSSVFTSDLEITSSADVDCNVTITPDCIRDLYKMGNTFAKKDPRNRLGISGYLEQYARLDDFSTFIDMFVPSLKGTTFDFKSINGGKNEQNSSLDSVEASLDVDYAIGLSGALSTYYGTAGRGMLIPDLDQPNITNNNNEPYLEQLHYLLGLPDSELPAVLSTSYGENEQSVPKKYTDSACHLFARLGARGVSVIFSSGDTGVGSACQSNDGKKITKFNPIFPAACPFVTSVGGTHQINPEVAIHFSSGGFSERFSRPWYQELDVNHYLQHELEHGKWDGMYNPSGRGFPDVSAQSYKFATRDHGRTIGVSGTSASAPLFAGVVSILNSIRLAHHKPRLGFLNPWLYTIGRSGFTDIVHGGSDGCTGTDQYSHLPTPYVPGASWNATRGWDPVTGLGTPNFETLSKLVLQY.

Positions 1 to 22 (MVSFTLRAIGACLVSLPALVTA) are cleaved as a signal peptide. The propeptide at 23 to 202 (APTSHISGDF…SVFTSDLEIT (180 aa)) is removed in mature form. N-linked (GlcNAc...) asparagine glycosylation is found at Asn-210 and Asn-281. The Peptidase S53 domain maps to 212–601 (TITPDCIRDL…ETLSKLVLQY (390 aa)). Residues Glu-288 and Asp-292 each act as charge relay system in the active site. A glycan (N-linked (GlcNAc...) asparagine) is linked at Asn-323. Residue Ser-504 is the Charge relay system of the active site. Ca(2+) contacts are provided by Asp-546 and Ile-547. Asn-575 carries N-linked (GlcNAc...) asparagine glycosylation. Ca(2+) is bound by residues Gly-579 and Asp-581.

Ca(2+) is required as a cofactor.

The protein resides in the secreted. The protein localises to the extracellular space. The enzyme catalyses Release of an N-terminal tripeptide from a polypeptide.. Secreted tripeptidyl-peptidase which degrades proteins at acidic pHs and is involved in virulence. This chain is Tripeptidyl-peptidase SED4 (SED4), found in Arthroderma otae (strain ATCC MYA-4605 / CBS 113480) (Microsporum canis).